The chain runs to 298 residues: Probable alpha-L-glutamate ligase 2 (298 aa).

The ATP-grasp domain occupies 104–287 (MQLLSRQGIG…VADAIICFME (184 aa)). ATP is bound by residues lysine 141, 178–179 (EY), aspartate 187, and 211–213 (RSN). Mg(2+)-binding residues include aspartate 248, glutamate 260, and asparagine 262. Residues aspartate 248, glutamate 260, and asparagine 262 each contribute to the Mn(2+) site.

Belongs to the RimK family. Mg(2+) serves as cofactor. Requires Mn(2+) as cofactor.

The chain is Probable alpha-L-glutamate ligase 2 from Shewanella frigidimarina (strain NCIMB 400).